The following is a 164-amino-acid chain: S-ribosylhomocysteine lyase (164 aa).

3 residues coordinate Fe cation: H61, H65, and C131.

It belongs to the LuxS family. As to quaternary structure, homodimer. It depends on Fe cation as a cofactor.

The enzyme catalyses S-(5-deoxy-D-ribos-5-yl)-L-homocysteine = (S)-4,5-dihydroxypentane-2,3-dione + L-homocysteine. Functionally, involved in the synthesis of autoinducer 2 (AI-2) which is secreted by bacteria and is used to communicate both the cell density and the metabolic potential of the environment. The regulation of gene expression in response to changes in cell density is called quorum sensing. Catalyzes the transformation of S-ribosylhomocysteine (RHC) to homocysteine (HC) and 4,5-dihydroxy-2,3-pentadione (DPD). The chain is S-ribosylhomocysteine lyase from Bifidobacterium longum (strain NCC 2705).